Reading from the N-terminus, the 132-residue chain is Ribosome-binding factor A (132 aa).

It belongs to the RbfA family. In terms of assembly, monomer. Binds 30S ribosomal subunits, but not 50S ribosomal subunits or 70S ribosomes.

It localises to the cytoplasm. Functionally, one of several proteins that assist in the late maturation steps of the functional core of the 30S ribosomal subunit. Associates with free 30S ribosomal subunits (but not with 30S subunits that are part of 70S ribosomes or polysomes). Required for efficient processing of 16S rRNA. May interact with the 5'-terminal helix region of 16S rRNA. This Bordetella avium (strain 197N) protein is Ribosome-binding factor A.